The chain runs to 268 residues: uncharacterized protein (268 aa).

A coiled-coil region spans residues D132–E159.

This is an uncharacterized protein from Methanocaldococcus jannaschii (strain ATCC 43067 / DSM 2661 / JAL-1 / JCM 10045 / NBRC 100440) (Methanococcus jannaschii).